The chain runs to 368 residues: Protein Wnt-1 (368 aa).

The first 25 residues, 1 to 25 (MRGPALLLALRALCALSALRGTARA), serve as a signal peptide directing secretion. Intrachain disulfides connect cysteine 91-cysteine 102, cysteine 141-cysteine 149, cysteine 151-cysteine 168, cysteine 216-cysteine 230, cysteine 218-cysteine 225, cysteine 297-cysteine 328, cysteine 313-cysteine 323, cysteine 327-cysteine 367, cysteine 343-cysteine 358, cysteine 345-cysteine 355, and cysteine 350-cysteine 351. A lipid anchor (O-palmitoleoyl serine; by PORCN) is attached at serine 222.

The protein belongs to the Wnt family. Forms a soluble 1:1 complex with AFM; this prevents oligomerization and is required for prolonged biological activity. The complex with AFM may represent the physiological form in body fluids. Interacts with PORCN. N-glycosylated. N-glycosylation favors subsequent palmitoleoylation. Post-translationally, palmitoleoylation is required for efficient binding to frizzled receptors. Palmitoleoylation is necessary for proper trafficking to cell surface. Depalmitoleoylated by NOTUM, leading to inhibit Wnt signaling pathway.

Its subcellular location is the secreted. It localises to the extracellular space. The protein resides in the extracellular matrix. Functionally, ligand for members of the frizzled family of seven transmembrane receptors. Acts in the canonical Wnt signaling pathway by promoting beta-catenin-dependent transcriptional activation. Developmental protein that promotes cell proliferation in the developing spinal cord. Has a role in osteoblast function, bone development and bone homeostasis. This is Protein Wnt-1 (WNT1) from Gallus gallus (Chicken).